A 165-amino-acid polypeptide reads, in one-letter code: Thiol peroxidase (165 aa).

In terms of domain architecture, Thioredoxin spans 18-165 (PAVGSPAPAF…YEAALAALGA (148 aa)). Cys-60 functions as the Cysteine sulfenic acid (-SOH) intermediate in the catalytic mechanism. Cys-60 and Cys-93 are oxidised to a cystine.

This sequence belongs to the peroxiredoxin family. Tpx subfamily. Homodimer.

The enzyme catalyses a hydroperoxide + [thioredoxin]-dithiol = an alcohol + [thioredoxin]-disulfide + H2O. In terms of biological role, thiol-specific peroxidase that catalyzes the reduction of hydrogen peroxide and organic hydroperoxides to water and alcohols, respectively. Plays a role in cell protection against oxidative stress by detoxifying peroxides. The protein is Thiol peroxidase of Mycobacterium bovis (strain ATCC BAA-935 / AF2122/97).